The following is a 346-amino-acid chain: MPNPISLSHFAFAYGRPENTAVLKAEPADFQVDEHIAYTLSGEGEHLWVWVQKIGQNTDWVAKQIASWAGITAKEMGVAGKKDRQAITRQWMSLHLPGKQAPDIGSLDVPGVTLLKAMRHHRKLQTGGLSGNRFTLVLREINGNLDQIETRLQKIAGKGVPNYFGEQRFGNDFQNLAKATALFQGQIKSPKRHQKSLYISAARSWIFNEILSQRVRQGTWNRAISGDVFQLEGSQKWFADDSDPSLSKRVEEKGLHPTGALTGRGVLPSQSDAFQVEQAVLEKHPFWQAGLEKLGLKQERRALRVLPKEMHWEWLDQQTLSVGFDLPAGSYATMVMRELFEVKLED.

D83 functions as the Nucleophile in the catalytic mechanism. The region spanning 159–305 (GVPNYFGEQR…LKQERRALRV (147 aa)) is the TRUD domain.

It belongs to the pseudouridine synthase TruD family.

It carries out the reaction uridine(13) in tRNA = pseudouridine(13) in tRNA. Responsible for synthesis of pseudouridine from uracil-13 in transfer RNAs. This is tRNA pseudouridine synthase D from Hydrogenovibrio crunogenus (strain DSM 25203 / XCL-2) (Thiomicrospira crunogena).